The following is a 1517-amino-acid chain: DNA-directed RNA polymerase subunit beta' (1517 aa).

4 residues coordinate Zn(2+): C71, C73, C86, and C89. Residues D482, D484, and D486 each contribute to the Mg(2+) site. 4 residues coordinate Zn(2+): C812, C886, C893, and C896.

Belongs to the RNA polymerase beta' chain family. In terms of assembly, the RNAP catalytic core consists of 2 alpha, 1 beta, 1 beta' and 1 omega subunit. When a sigma factor is associated with the core the holoenzyme is formed, which can initiate transcription. Mg(2+) serves as cofactor. Zn(2+) is required as a cofactor.

It carries out the reaction RNA(n) + a ribonucleoside 5'-triphosphate = RNA(n+1) + diphosphate. DNA-dependent RNA polymerase catalyzes the transcription of DNA into RNA using the four ribonucleoside triphosphates as substrates. This is DNA-directed RNA polymerase subunit beta' from Campylobacter jejuni subsp. jejuni serotype O:6 (strain 81116 / NCTC 11828).